The primary structure comprises 406 residues: 2,3-bisphosphoglycerate-independent phosphoglycerate mutase (406 aa).

This sequence belongs to the BPG-independent phosphoglycerate mutase family. A-PGAM subfamily.

The enzyme catalyses (2R)-2-phosphoglycerate = (2R)-3-phosphoglycerate. It functions in the pathway carbohydrate degradation; glycolysis; pyruvate from D-glyceraldehyde 3-phosphate: step 3/5. In terms of biological role, catalyzes the interconversion of 2-phosphoglycerate and 3-phosphoglycerate. This chain is 2,3-bisphosphoglycerate-independent phosphoglycerate mutase, found in Methanococcus maripaludis (strain C7 / ATCC BAA-1331).